We begin with the raw amino-acid sequence, 130 residues long: Succinate dehydrogenase cytochrome b556 subunit (130 aa).

Residues 1-26 (MADVNRGNRPLSPHLQVYRLPLAAIT) lie on the Cytoplasmic side of the membrane. Residues 27-52 (SIMTRITGHALVAGIVLITWWLVAAV) form a helical membrane-spanning segment. Topologically, residues 53 to 68 (TSPGAFACADWVVRSW) are periplasmic. Residues 69–89 (LGFIILTGSMWALWYHLLAGL) form a helical membrane-spanning segment. Residue H84 participates in heme binding. Topologically, residues 90–109 (RHLFYDAGYGLEIEQAHKSS) are cytoplasmic. Residues 110-130 (QALIAGSVVLAVLTLIVFFVF) form a helical membrane-spanning segment.

This sequence belongs to the cytochrome b560 family. In terms of assembly, part of an enzyme complex containing four subunits: a flavoprotein, an iron-sulfur protein, plus two membrane-anchoring proteins, SdhC and SdhD. The complex can form homotrimers. Heme is required as a cofactor.

The protein localises to the cell inner membrane. It functions in the pathway carbohydrate metabolism; tricarboxylic acid cycle. Functionally, membrane-anchoring subunit of succinate dehydrogenase (SDH). The chain is Succinate dehydrogenase cytochrome b556 subunit (sdhC) from Paracoccus denitrificans.